We begin with the raw amino-acid sequence, 194 residues long: dTTP/UTP pyrophosphatase (194 aa).

Residue Asp-73 is the Proton acceptor of the active site.

Belongs to the Maf family. YhdE subfamily. The cofactor is a divalent metal cation.

The protein localises to the cytoplasm. The enzyme catalyses dTTP + H2O = dTMP + diphosphate + H(+). The catalysed reaction is UTP + H2O = UMP + diphosphate + H(+). Functionally, nucleoside triphosphate pyrophosphatase that hydrolyzes dTTP and UTP. May have a dual role in cell division arrest and in preventing the incorporation of modified nucleotides into cellular nucleic acids. This Clostridium botulinum (strain Loch Maree / Type A3) protein is dTTP/UTP pyrophosphatase.